Here is a 40-residue protein sequence, read N- to C-terminus: Cell division inhibitor MciZ (40 aa).

Interacts with FtsZ. Binds to the C-terminal polymerization interface of FtsZ. Binds to FtsZ filaments.

With respect to regulation, highly effective in inhibiting polymerization at low and intermediate concentrations of GTP and only partially effective at high GTP concentrations. Functionally, blocks Z-ring formation in the mother cell during sporulation by inhibiting the polymerization of FtsZ. Binds to the minus end of FtsZ and functions as a filament-capping protein. At high concentrations, is capable of both capping and sequestration of FtsZ. Decreases the GTPase activity of FtsZ. This Bacillus subtilis (strain 168) protein is Cell division inhibitor MciZ.